The sequence spans 612 residues: 1-deoxy-D-xylulose-5-phosphate synthase (612 aa).

Thiamine diphosphate contacts are provided by residues histidine 77 and 118 to 120 (GHS). Residue aspartate 147 participates in Mg(2+) binding. Thiamine diphosphate-binding positions include 148 to 149 (AA), asparagine 176, tyrosine 288, and glutamate 365. Residue asparagine 176 participates in Mg(2+) binding.

It belongs to the transketolase family. DXPS subfamily. As to quaternary structure, homodimer. It depends on Mg(2+) as a cofactor. Thiamine diphosphate serves as cofactor.

The enzyme catalyses D-glyceraldehyde 3-phosphate + pyruvate + H(+) = 1-deoxy-D-xylulose 5-phosphate + CO2. Its pathway is metabolic intermediate biosynthesis; 1-deoxy-D-xylulose 5-phosphate biosynthesis; 1-deoxy-D-xylulose 5-phosphate from D-glyceraldehyde 3-phosphate and pyruvate: step 1/1. Catalyzes the acyloin condensation reaction between C atoms 2 and 3 of pyruvate and glyceraldehyde 3-phosphate to yield 1-deoxy-D-xylulose-5-phosphate (DXP). This is 1-deoxy-D-xylulose-5-phosphate synthase from Malacoplasma penetrans (strain HF-2) (Mycoplasma penetrans).